The chain runs to 732 residues: Ferric aerobactin receptor (732 aa).

The N-terminal stretch at 1–25 (MMISKKYTLWALNPLLLTMMAPAVA) is a signal peptide. The TonB box motif lies at 31 to 38 (ETFVVSAN). The 111-residue stretch at 43–153 (TVAEMAQTTW…TGGLINIVTK (111 aa)) folds into the TBDR plug domain. The TBDR beta-barrel domain maps to 158–732 (ETMMEFEAGT…TFGLNYSVLF (575 aa)). The TonB C-terminal box motif lies at 715-732 (YDYKGRGRTFGLNYSVLF).

It belongs to the TonB-dependent receptor family.

The protein resides in the cell outer membrane. Its function is as follows. Receptor for cloacin DF13/aerobactin. The protein is Ferric aerobactin receptor (iutA) of Escherichia coli.